A 258-amino-acid polypeptide reads, in one-letter code: Granzyme M (258 aa).

The Peptidase S1 domain occupies 21–250 (IIGGREAVPH…YSSWIRKVIG (230 aa)). A disulfide bridge connects residues Cys-46 and Cys-62. Residues His-61 and Asp-107 each act as charge relay system in the active site. The disordered stretch occupies residues 122–141 (NVKPLALPRKPRDKPAEGSR). 3 disulfides stabilise this stretch: Cys-142–Cys-210, Cys-173–Cys-189, and Cys-200–Cys-226. A glycan (N-linked (GlcNAc...) asparagine) is linked at Asn-174. Ser-204 (charge relay system) is an active-site residue. An N-linked (GlcNAc...) asparagine glycan is attached at Asn-225.

Belongs to the peptidase S1 family. Granzyme subfamily.

It localises to the secreted. Its subcellular location is the cytoplasmic granule. In terms of biological role, cleaves peptide substrates after methionine, leucine, and norleucine. Physiological substrates include EZR, alpha-tubulins and the apoptosis inhibitor BIRC5/Survivin. Promotes caspase activation and subsequent apoptosis of target cells. This is Granzyme M (Gzmm) from Rattus norvegicus (Rat).